The primary structure comprises 111 residues: Large ribosomal subunit protein P2B (111 aa).

The tract at residues Leu62–Asp111 is disordered. The segment covering Ser67–Ala87 has biased composition (low complexity). A compositionally biased stretch (acidic residues) spans Glu88–Met105. Phosphoserine is present on Ser101.

The protein belongs to the eukaryotic ribosomal protein P1/P2 family.

Functionally, plays an important role in the elongation step of protein synthesis. This chain is Large ribosomal subunit protein P2B (RPP2B), found in Candida albicans (Yeast).